Consider the following 40-residue polypeptide: Photosystem II reaction center protein J (40 aa).

A helical transmembrane segment spans residues 8-28 (IPLWMIGTLAGILVISLIGIF).

Belongs to the PsbJ family. In terms of assembly, PSII is composed of 1 copy each of membrane proteins PsbA, PsbB, PsbC, PsbD, PsbE, PsbF, PsbH, PsbI, PsbJ, PsbK, PsbL, PsbM, PsbT, PsbX, PsbY, PsbZ, Psb30/Ycf12, at least 3 peripheral proteins of the oxygen-evolving complex and a large number of cofactors. It forms dimeric complexes.

It localises to the plastid membrane. Its function is as follows. One of the components of the core complex of photosystem II (PSII). PSII is a light-driven water:plastoquinone oxidoreductase that uses light energy to abstract electrons from H(2)O, generating O(2) and a proton gradient subsequently used for ATP formation. It consists of a core antenna complex that captures photons, and an electron transfer chain that converts photonic excitation into a charge separation. The sequence is that of Photosystem II reaction center protein J from Cuscuta gronovii (Common dodder).